A 668-amino-acid polypeptide reads, in one-letter code: Packaging protein UL32 homolog (668 aa).

Positions 1–10 (MNPSTHVSSN) are enriched in polar residues. Residues 1-35 (MNPSTHVSSNGPTTPPHGPHTTFLPPTSPAPSTSS) form a disordered region. The segment covering 19–35 (PHTTFLPPTSPAPSTSS) has biased composition (low complexity). Residues Cys-200, Cys-203, His-276, and Cys-282 each contribute to the Zn(2+) site. A zinc finger 1 region spans residues 200–282 (CNLCAIISIC…FHLHFFINRC (83 aa)). Basic and acidic residues-rich tracts occupy residues 392-401 (SEREDARMMM) and 410-419 (GEKGGDDPGR). The interval 392–430 (SEREDARMMMEEEEDEEGGEKGGDDPGRHNGGGTSGGFS) is disordered. Zn(2+)-binding residues include Cys-459, Cys-462, His-567, and Cys-574. The segment at 459–574 (CLLCELMACS…YKHFFCDPQC (116 aa)) is zinc finger 2.

This sequence belongs to the herpesviridae UL32 protein family.

It is found in the host cytoplasm. Its subcellular location is the host nucleus. In terms of biological role, plays a role in efficient localization of neo-synthesized capsids to nuclear replication compartments, thereby controlling cleavage and packaging of virus genomic DNA. This Homo sapiens (Human) protein is Packaging protein UL32 homolog (UL52).